Here is a 242-residue protein sequence, read N- to C-terminus: 4-hydroxy-tetrahydrodipicolinate reductase (242 aa).

Residues 79 to 81 (ATT) and 103 to 106 (SANM) contribute to the NAD(+) site. The Proton donor/acceptor role is filled by His-135. His-136 lines the (S)-2,3,4,5-tetrahydrodipicolinate pocket. The active-site Proton donor is Lys-139. 145–146 (GT) is a (S)-2,3,4,5-tetrahydrodipicolinate binding site.

This sequence belongs to the DapB family.

The protein resides in the cytoplasm. It carries out the reaction (S)-2,3,4,5-tetrahydrodipicolinate + NAD(+) + H2O = (2S,4S)-4-hydroxy-2,3,4,5-tetrahydrodipicolinate + NADH + H(+). It catalyses the reaction (S)-2,3,4,5-tetrahydrodipicolinate + NADP(+) + H2O = (2S,4S)-4-hydroxy-2,3,4,5-tetrahydrodipicolinate + NADPH + H(+). It participates in amino-acid biosynthesis; L-lysine biosynthesis via DAP pathway; (S)-tetrahydrodipicolinate from L-aspartate: step 4/4. In terms of biological role, catalyzes the conversion of 4-hydroxy-tetrahydrodipicolinate (HTPA) to tetrahydrodipicolinate. This Staphylococcus carnosus (strain TM300) protein is 4-hydroxy-tetrahydrodipicolinate reductase.